A 229-amino-acid polypeptide reads, in one-letter code: Transmembrane emp24 domain-containing protein 5 (229 aa).

The first 27 residues, 1–27 (MGDKIWLPFPVLLLAALPPVLLPGAAG), serve as a signal peptide directing secretion. Residues 28 to 196 (FTPSLDSDFT…IQESNFDRVN (169 aa)) lie on the Lumenal side of the membrane. Residues 45–126 (KECFYQPMPL…EKVIFFELIL (82 aa)) form the GOLD domain. A helical membrane pass occupies residues 197–217 (FWSMVNLVVMVVVSAIQVYML). The Cytoplasmic portion of the chain corresponds to 218–229 (KSLFEDKRKSRT).

This sequence belongs to the EMP24/GP25L family. As to quaternary structure, interacts with TMED9 and TMED10.

It is found in the endoplasmic reticulum membrane. Its subcellular location is the golgi apparatus. The protein resides in the cis-Golgi network membrane. The protein localises to the endoplasmic reticulum-Golgi intermediate compartment membrane. Its function is as follows. Potential role in vesicular protein trafficking, mainly in the early secretory pathway. Required for the maintenance of the Golgi apparatus; involved in protein exchange between Golgi stacks during assembly. Probably not required for COPI-vesicle-mediated retrograde transport. The protein is Transmembrane emp24 domain-containing protein 5 (TMED5) of Homo sapiens (Human).